Here is a 211-residue protein sequence, read N- to C-terminus: Pyridoxine/pyridoxamine 5'-phosphate oxidase (211 aa).

Substrate-binding positions include 7 to 10 (RREY) and Lys-65. FMN-binding positions include 60–65 (RIVLLK), 75–76 (YT), Arg-81, Lys-82, and Gln-104. Residues Tyr-122, Arg-126, and Ser-130 each coordinate substrate. FMN contacts are provided by residues 139-140 (QS) and Trp-184. 190-192 (RLH) is a binding site for substrate. Residue Arg-194 coordinates FMN.

It belongs to the pyridoxamine 5'-phosphate oxidase family. In terms of assembly, homodimer. The cofactor is FMN.

The enzyme catalyses pyridoxamine 5'-phosphate + O2 + H2O = pyridoxal 5'-phosphate + H2O2 + NH4(+). It catalyses the reaction pyridoxine 5'-phosphate + O2 = pyridoxal 5'-phosphate + H2O2. The protein operates within cofactor metabolism; pyridoxal 5'-phosphate salvage; pyridoxal 5'-phosphate from pyridoxamine 5'-phosphate: step 1/1. Its pathway is cofactor metabolism; pyridoxal 5'-phosphate salvage; pyridoxal 5'-phosphate from pyridoxine 5'-phosphate: step 1/1. Functionally, catalyzes the oxidation of either pyridoxine 5'-phosphate (PNP) or pyridoxamine 5'-phosphate (PMP) into pyridoxal 5'-phosphate (PLP). This Photobacterium profundum (strain SS9) protein is Pyridoxine/pyridoxamine 5'-phosphate oxidase.